The primary structure comprises 658 residues: MKLYCLSGHPTLPCNVLKFKSTTIMLDCGLDMTSTLNFLPLPLVQSPRLSNLPGWSLKDGNAFLDKELKECSGHVFVDSVPEFCLPETELIDLSTVDVILISNYHCMMALPYITEHTGFTGTVYATEPTMQIGRLLMEELVNFIERVPKAQSASLWKNKDIQRLLPSPLKDAVEVSTWRRCYTMQEVNSALSKIQLVGYSQKIELFGAVQVTPLSSGYALGSSNWIIQSHYEKVSYVSGSSLLTTHPQPMDQASLKNSDVLILTGLTQIPTANPDGMVGEFCSNLALTVRNGGNVLVPCYPSGVIYDLLECLYQYIDSAGLSNIPFYFISPVANSSLEFSQIFAEWLCHNKQSKVYLPEPPFPHAELIQTNKLKHYRSIHGDFSNDFRQPCVLFTGHPSLRFGDVVHFMELWGKSSLNTIIFTEPDFSYLEALAPYQPLAMKCIYCPIDTRLNFIQVSKLLKEVQPLHVVCPEQYTQPPPAQAHRMDLMIDCQPPAMSYRRAEVLALPFKRRYEKIEIMPELADSLVPMEIKPGISLATVSAVLHTKDNKHVLQPPPKPTQPTSSKKRKRVNEDIPDCKVLKPLLSGSIPVEQFVQTLEKHGFSDIKVEDTAKGHIVLLQEAETLIQIEEDSTHIICDNDETLRVRLRDLVLRFLQKF.

Lysine 58 participates in a covalent cross-link: Glycyl lysine isopeptide (Lys-Gly) (interchain with G-Cter in SUMO2). The tract at residues 548 to 572 (DNKHVLQPPPKPTQPTSSKKRKRVN) is disordered. The Nuclear localization signal signature appears at 566-570 (KKRKR).

Belongs to the metallo-beta-lactamase superfamily. RNA-metabolizing metallo-beta-lactamase-like family. INTS9 subfamily. As to quaternary structure, component of the Integrator complex, composed of core subunits INTS1, INTS2, INTS3, INTS4, INTS5, INTS6, INTS7, INTS8, INTS9/RC74, INTS10, INTS11/CPSF3L, INTS12, INTS13, INTS14 and INTS15. The core complex associates with protein phosphatase 2A subunits PPP2CA and PPP2R1A, to form the Integrator-PP2A (INTAC) complex. INTS9 is part of the RNA endonuclease subcomplex, composed of INTS4, INTS9, INTS11 and inositol hexakisphosphate (InsP6). Interacts with WDR73; interaction is required for the assembly of the RNA endonuclease subcomplex in the cytoplasm. Interacts with BRAT1; interaction is required for the assembly of the RNA endonuclease subcomplex. Interacts with ESRRB, ESRRB is not a core component of the Integrator complex and this association is a bridge for the interaction with the multiprotein complex Integrator; attracts the transcriptional machinery.

The protein localises to the nucleus. The protein resides in the cytoplasm. Component of the integrator complex, a multiprotein complex that terminates RNA polymerase II (Pol II) transcription in the promoter-proximal region of genes. The integrator complex provides a quality checkpoint during transcription elongation by driving premature transcription termination of transcripts that are unfavorably configured for transcriptional elongation: the complex terminates transcription by (1) catalyzing dephosphorylation of the C-terminal domain (CTD) of Pol II subunit POLR2A/RPB1 and SUPT5H/SPT5, (2) degrading the exiting nascent RNA transcript via endonuclease activity and (3) promoting the release of Pol II from bound DNA. The integrator complex is also involved in terminating the synthesis of non-coding Pol II transcripts, such as enhancer RNAs (eRNAs), small nuclear RNAs (snRNAs), telomerase RNAs and long non-coding RNAs (lncRNAs). Mediates recruitment of cytoplasmic dynein to the nuclear envelope, probably as component of the integrator complex. This chain is Integrator complex subunit 9 (Ints9), found in Mus musculus (Mouse).